The primary structure comprises 346 residues: S-adenosylmethionine:tRNA ribosyltransferase-isomerase (346 aa).

It belongs to the QueA family. In terms of assembly, monomer.

The protein localises to the cytoplasm. The catalysed reaction is 7-aminomethyl-7-carbaguanosine(34) in tRNA + S-adenosyl-L-methionine = epoxyqueuosine(34) in tRNA + adenine + L-methionine + 2 H(+). It participates in tRNA modification; tRNA-queuosine biosynthesis. Its function is as follows. Transfers and isomerizes the ribose moiety from AdoMet to the 7-aminomethyl group of 7-deazaguanine (preQ1-tRNA) to give epoxyqueuosine (oQ-tRNA). The sequence is that of S-adenosylmethionine:tRNA ribosyltransferase-isomerase from Chloroherpeton thalassium (strain ATCC 35110 / GB-78).